The sequence spans 217 residues: MLO-like protein (217 aa).

Helical transmembrane passes span 35–55 (FKVV…FLLS), 59–79 (GWVA…VVGT), and 119–139 (LVLF…AFFI).

The protein belongs to the MLO family.

The protein localises to the membrane. Its function is as follows. May be involved in modulation of pathogen defense and leaf cell death. This chain is MLO-like protein, found in Linum usitatissimum (Flax).